The primary structure comprises 106 residues: ATP-dependent Clp protease adapter protein ClpS (106 aa).

This sequence belongs to the ClpS family. Binds to the N-terminal domain of the chaperone ClpA.

In terms of biological role, involved in the modulation of the specificity of the ClpAP-mediated ATP-dependent protein degradation. The chain is ATP-dependent Clp protease adapter protein ClpS from Vibrio vulnificus (strain CMCP6).